The following is a 297-amino-acid chain: Phosphoribosylaminoimidazole-succinocarboxamide synthase (297 aa).

The protein belongs to the SAICAR synthetase family.

It catalyses the reaction 5-amino-1-(5-phospho-D-ribosyl)imidazole-4-carboxylate + L-aspartate + ATP = (2S)-2-[5-amino-1-(5-phospho-beta-D-ribosyl)imidazole-4-carboxamido]succinate + ADP + phosphate + 2 H(+). The protein operates within purine metabolism; IMP biosynthesis via de novo pathway; 5-amino-1-(5-phospho-D-ribosyl)imidazole-4-carboxamide from 5-amino-1-(5-phospho-D-ribosyl)imidazole-4-carboxylate: step 1/2. The chain is Phosphoribosylaminoimidazole-succinocarboxamide synthase from Mycobacterium tuberculosis (strain ATCC 25177 / H37Ra).